Consider the following 498-residue polypeptide: UPF0371 protein cauri_2449 (498 aa).

The protein belongs to the UPF0371 family.

The sequence is that of UPF0371 protein cauri_2449 from Corynebacterium aurimucosum (strain ATCC 700975 / DSM 44827 / CIP 107346 / CN-1) (Corynebacterium nigricans).